Here is a 326-residue protein sequence, read N- to C-terminus: Beta-ketoacyl-[acyl-carrier-protein] synthase III (326 aa).

Catalysis depends on residues Cys-111 and His-253. The segment at Gln-254–Arg-258 is ACP-binding. Asn-283 is an active-site residue.

It belongs to the thiolase-like superfamily. FabH family. Homodimer.

The protein localises to the cytoplasm. The catalysed reaction is malonyl-[ACP] + acetyl-CoA + H(+) = 3-oxobutanoyl-[ACP] + CO2 + CoA. It functions in the pathway lipid metabolism; fatty acid biosynthesis. In terms of biological role, catalyzes the condensation reaction of fatty acid synthesis by the addition to an acyl acceptor of two carbons from malonyl-ACP. Catalyzes the first condensation reaction which initiates fatty acid synthesis and may therefore play a role in governing the total rate of fatty acid production. Possesses both acetoacetyl-ACP synthase and acetyl transacylase activities. Its substrate specificity determines the biosynthesis of branched-chain and/or straight-chain of fatty acids. The polypeptide is Beta-ketoacyl-[acyl-carrier-protein] synthase III (Latilactobacillus sakei subsp. sakei (strain 23K) (Lactobacillus sakei subsp. sakei)).